The primary structure comprises 94 residues: Lipolysis-activating peptide 1-beta chain (94 aa).

A signal peptide spans 1–19 (MKILAVVLISVIVLNTANG). The LCN-type CS-alpha/beta domain maps to 20–87 (ENYYPQKYTN…YFNALESQCP (68 aa)). 3 cysteine pairs are disulfide-bonded: Cys34-Cys56, Cys42-Cys66, and Cys46-Cys68.

Belongs to the long (3 C-C) scorpion toxin superfamily. As to quaternary structure, homodimer; disulfide-linked or monomer (edited version) or heterodimer of an alpha chain (AC P0CI44 or AC P0CI45) and this beta chain (non-edited version). As to expression, expressed by the venom gland.

It localises to the secreted. The homodimer inhibits HMG-CoA reductase (HMGCR) (32% of inhibition produced by 0.6 uM), a glycoprotein involved in the control of cholesterol biosynthesis. The inhibitory effects of bumarsin are seen at much lower concentrations (0.6 uM) than that for statins such as atorvastatin (5 mM) and simvastatin (10 uM). In addition to inhibition of HMG-CoA reductase, this protein lowers cholesterol levels by inducing steroid hormone synthesis via StAR, and by increasing reverse cholesterol transport mediated by the induction of ABCA1 and APOA1. Its function is as follows. The heterodimer non-edited LVP1 induces lipolysis in rat adipocytes. Induction of lipolysis by LVP1 appears to be mediated through the beta-2 adrenergic receptor pathway (ADRB2). Functionally, the monomer edited version, similar to alpha-toxins, may modulate voltage-gated sodium channels (Nav) and may block voltage-gated potassium channels (Kv). This Lychas mucronatus (Chinese swimming scorpion) protein is Lipolysis-activating peptide 1-beta chain.